Here is a 365-residue protein sequence, read N- to C-terminus: Anhydro-N-acetylmuramic acid kinase (365 aa).

9-16 contributes to the ATP binding site; that stretch reads GTSLDGVD.

The protein belongs to the anhydro-N-acetylmuramic acid kinase family.

It catalyses the reaction 1,6-anhydro-N-acetyl-beta-muramate + ATP + H2O = N-acetyl-D-muramate 6-phosphate + ADP + H(+). Its pathway is amino-sugar metabolism; 1,6-anhydro-N-acetylmuramate degradation. It participates in cell wall biogenesis; peptidoglycan recycling. Functionally, catalyzes the specific phosphorylation of 1,6-anhydro-N-acetylmuramic acid (anhMurNAc) with the simultaneous cleavage of the 1,6-anhydro ring, generating MurNAc-6-P. Is required for the utilization of anhMurNAc either imported from the medium or derived from its own cell wall murein, and thus plays a role in cell wall recycling. The sequence is that of Anhydro-N-acetylmuramic acid kinase from Zymomonas mobilis subsp. mobilis (strain ATCC 31821 / ZM4 / CP4).